Reading from the N-terminus, the 177-residue chain is B-phycoerythrin beta chain (177 aa).

Cys50 and Cys61 together coordinate phycourobilin. Residue Asn72 is modified to N4-methylasparagine. (2R,3E)-phycoerythrobilin-binding residues include Cys82 and Cys158.

It belongs to the phycobiliprotein family. In terms of assembly, heteromer of 6 alpha, 6 beta and one gamma chain. Contains two covalently linked phycoerythrobilin chromophores and one covalently linked phycourobilin chromophore.

Its subcellular location is the plastid. The protein resides in the chloroplast thylakoid membrane. Functionally, light-harvesting photosynthetic bile pigment-protein from the phycobiliprotein complex. This Porphyridium sordidum (Red alga) protein is B-phycoerythrin beta chain (cpeB).